The sequence spans 79 residues: Conotoxin ArMSGL-0124 (79 aa).

Positions 1–20 are cleaved as a signal peptide; sequence MSRLGIMVLTLLLLVYMATS. Residues 21–44 constitute a propeptide that is removed on maturation; it reads HQDAGEKQATQRDAINFRWKRSLT. 3 disulfides stabilise this stretch: C52–C64, C56–C73, and C63–C77. Position 78 is a leucine amide (L78).

Belongs to the conotoxin O3 superfamily. Expressed by the venom duct.

Its subcellular location is the secreted. The polypeptide is Conotoxin ArMSGL-0124 (Conus arenatus (Sand-dusted cone)).